Here is a 351-residue protein sequence, read N- to C-terminus: Nicotinate-nucleotide--dimethylbenzimidazole phosphoribosyltransferase (351 aa).

Catalysis depends on Glu-317, which acts as the Proton acceptor.

It belongs to the CobT family.

It catalyses the reaction 5,6-dimethylbenzimidazole + nicotinate beta-D-ribonucleotide = alpha-ribazole 5'-phosphate + nicotinate + H(+). It functions in the pathway nucleoside biosynthesis; alpha-ribazole biosynthesis; alpha-ribazole from 5,6-dimethylbenzimidazole: step 1/2. Functionally, catalyzes the synthesis of alpha-ribazole-5'-phosphate from nicotinate mononucleotide (NAMN) and 5,6-dimethylbenzimidazole (DMB). In Pseudomonas aeruginosa (strain LESB58), this protein is Nicotinate-nucleotide--dimethylbenzimidazole phosphoribosyltransferase.